Reading from the N-terminus, the 116-residue chain is Large ribosomal subunit protein bL20 (116 aa).

The protein belongs to the bacterial ribosomal protein bL20 family.

Functionally, binds directly to 23S ribosomal RNA and is necessary for the in vitro assembly process of the 50S ribosomal subunit. It is not involved in the protein synthesizing functions of that subunit. This chain is Large ribosomal subunit protein bL20, found in Helicobacter pylori (strain G27).